A 143-amino-acid chain; its full sequence is UPF0251 protein Rru_A1194 (143 aa).

Residues 100-143 form a disordered region; sequence LDGSACPNRRQRRGPCARRGAAGALARQTGDEPPSSPTDNEKDD. The segment covering 116–126 has biased composition (low complexity); that stretch reads ARRGAAGALAR.

This sequence belongs to the UPF0251 family.

This chain is UPF0251 protein Rru_A1194, found in Rhodospirillum rubrum (strain ATCC 11170 / ATH 1.1.1 / DSM 467 / LMG 4362 / NCIMB 8255 / S1).